Consider the following 989-residue polypeptide: Voltage-gated delayed rectifier potassium channel KCNH1 (989 aa).

Over 1 to 220 (MTMAGGRRGL…LHYCVFKTTW (220 aa)) the chain is Cytoplasmic. The PAS domain maps to 14–94 (QNTFLENIVR…QTFENYEMNS (81 aa)). In terms of domain architecture, PAC spans 93–145 (NSFEILMYKKNRTPVWFFVKIAPIRNEQDKVVLFLCTFSDITAFKQPIEDDSC). The required for phosphatidylinositol bisphosphate binding stretch occupies residues 151–162 (FARLTRALTSSR). The helical transmembrane segment at 221-241 (DWIILILTFYTAILVPYNVSF) threads the bilayer. The Extracellular segment spans residues 242–248 (KTRQNNV). The chain crosses the membrane as a helical span at residues 249 to 269 (AWLVVDSIVDVIFLVDIVLNF). The Cytoplasmic portion of the chain corresponds to 270 to 290 (HTTFVGPAGEVISDPKLIRMN). A helical membrane pass occupies residues 291 to 309 (YLKTWFVIDLLSCLPYDVI). Residues 310 to 345 (NAFENVDEVSAFMGDPGKIGFADQIPPPLEGRESQG) are Extracellular-facing. A helical; Voltage-sensor transmembrane segment spans residues 346-368 (ISSLFSSLKVVRLLRLGRVARKL). At 369–377 (DHYIEYGAA) the chain is on the cytoplasmic side. Residues 378–399 (VLVLLVCVFGLAAHWMACIWYS) form a helical membrane-spanning segment. Topologically, residues 400–448 (IGDYEIFDEDTKTIRNNSWLYQLALDIGTPYQFNGSGSGKWEGGPSKNS) are extracellular. N-linked (GlcNAc...) asparagine glycosylation is found at N415 and N433. Positions 449–470 (VYISSLYFTMTSLTSVGFGNIA) form an intramembrane region, pore-forming. The short motif at 463–468 (SVGFGN) is the Selectivity filter element. Residues 471–477 (PSTDIEK) are Extracellular-facing. A helical membrane pass occupies residues 478 to 498 (IFAVAIMMIGSLLYATIFGNV). Residues 499–989 (TTIFQQMYAN…ESDRDIFGAS (491 aa)) lie on the Cytoplasmic side of the membrane. The interval 673–770 (KRDALQKVLE…LDDLDVEKGN (98 aa)) is calmodulin-binding. The tract at residues 699-701 (YNL) is interaction with cyclic nucleotide-binding pocket. 2 stretches are compositionally biased toward basic and acidic residues: residues 857–879 (ESME…KTDS) and 887–901 (SDLR…RSPQ). Disordered regions lie at residues 857-905 (ESME…DRSP) and 961-989 (RGSA…FGAS). Residues 924–964 (ATVLEVKYELKEDIKALNAKMTSIEKQLSEILRILMSRGSA) form a CAD (involved in subunit assembly) region. Over residues 962 to 979 (GSAQSPQETGEISRPQSP) the composition is skewed to polar residues. Phosphoserine occurs at positions 974, 978, and 981. Residues 980–989 (ESDRDIFGAS) show a composition bias toward basic and acidic residues.

It belongs to the potassium channel family. H (Eag) (TC 1.A.1.20) subfamily. Kv10.1/KCNH1 sub-subfamily. Homomultimer. The potassium channel is composed of a homo- or heterotetrameric complex of pore-forming alpha subunits that can associate with modulating beta subunits. Heteromultimer with KCNH5/EAG2. Interacts with ALG10B. Interacts with RABEP1. Interacts (via C-terminus) with CTTN. Interacts (via C-terminal cytoplasmic region) with Ca(2+)-bound calmodulin. In terms of processing, channel activity is regulated via tyrosine phosphorylation/dephosphorylation by SRC and PTPN6. In terms of tissue distribution, detected in brain (at protein level). Highly expressed in olfactory bulb. Detected in brain cortex, hippocampus, brain stem, striatum, thalamus, hypothalamus and spinal cord.

It is found in the cell membrane. Its subcellular location is the nucleus inner membrane. The protein resides in the cell projection. It localises to the dendrite. The protein localises to the axon. It is found in the presynaptic cell membrane. Its subcellular location is the perikaryon. The protein resides in the postsynaptic density membrane. It localises to the early endosome membrane. The catalysed reaction is K(+)(in) = K(+)(out). With respect to regulation, channel activity is inhibited by interaction with Ca(2+)-bound calmodulin. Interaction of a single pore-forming alpha subunit with a calmodulin chain is sufficient to promote channel closure. Channel activity is not regulated by cyclic nucleotides. Channel activity is inhibited by binding intracellular phosphatidylinositol-3,5-bisphosphate and phosphatidylinositol-4,5-bisphosphate (PIP2), but is not inhibited by phosphatidylinositol 4-phosphate. Pore-forming (alpha) subunit of a voltage-gated delayed rectifier potassium channel that mediates outward-rectifying potassium currents which, on depolarization, reaches a steady-state level and do not inactivate. The activation kinetics depend on the prepulse potential and external divalent cation concentration. With negative prepulses, the current activation is delayed and slowed down several fold, whereas more positive prepulses speed up activation. The time course of activation is biphasic with a fast and a slowly activating current component. Activates at more positive membrane potentials and exhibit a steeper activation curve. Channel properties are modulated by subunit assembly. Mediates IK(NI) current in myoblasts. Involved in the regulation of cell proliferation and differentiation, in particular adipogenic and osteogenic differentiation in bone marrow-derived mesenchymal stem cells (MSCs). In Mus musculus (Mouse), this protein is Voltage-gated delayed rectifier potassium channel KCNH1.